The sequence spans 150 residues: Small ribosomal subunit protein uS11 (150 aa).

Residues 130 to 150 form a disordered region; sequence DVTPIPSDSTRRKSGRRGRRL. Residues 141 to 150 show a composition bias toward basic residues; the sequence is RKSGRRGRRL.

The protein belongs to the universal ribosomal protein uS11 family.

The chain is Small ribosomal subunit protein uS11 (RPS14) from Lupinus luteus (European yellow lupine).